The following is a 360-amino-acid chain: UDP-N-acetylglucosamine--N-acetylmuramyl-(pentapeptide) pyrophosphoryl-undecaprenol N-acetylglucosamine transferase (360 aa).

UDP-N-acetyl-alpha-D-glucosamine-binding positions include 13-15 (TGG), R164, S192, and Q293.

The protein belongs to the glycosyltransferase 28 family. MurG subfamily.

The protein localises to the cell inner membrane. It carries out the reaction di-trans,octa-cis-undecaprenyl diphospho-N-acetyl-alpha-D-muramoyl-L-alanyl-D-glutamyl-meso-2,6-diaminopimeloyl-D-alanyl-D-alanine + UDP-N-acetyl-alpha-D-glucosamine = di-trans,octa-cis-undecaprenyl diphospho-[N-acetyl-alpha-D-glucosaminyl-(1-&gt;4)]-N-acetyl-alpha-D-muramoyl-L-alanyl-D-glutamyl-meso-2,6-diaminopimeloyl-D-alanyl-D-alanine + UDP + H(+). The protein operates within cell wall biogenesis; peptidoglycan biosynthesis. In terms of biological role, cell wall formation. Catalyzes the transfer of a GlcNAc subunit on undecaprenyl-pyrophosphoryl-MurNAc-pentapeptide (lipid intermediate I) to form undecaprenyl-pyrophosphoryl-MurNAc-(pentapeptide)GlcNAc (lipid intermediate II). This chain is UDP-N-acetylglucosamine--N-acetylmuramyl-(pentapeptide) pyrophosphoryl-undecaprenol N-acetylglucosamine transferase, found in Chromobacterium violaceum (strain ATCC 12472 / DSM 30191 / JCM 1249 / CCUG 213 / NBRC 12614 / NCIMB 9131 / NCTC 9757 / MK).